The chain runs to 279 residues: Putative pyruvate, phosphate dikinase regulatory protein (279 aa).

Residue 153-160 participates in ADP binding; it reads GVSRTSKT.

This sequence belongs to the pyruvate, phosphate/water dikinase regulatory protein family. PDRP subfamily.

The catalysed reaction is N(tele)-phospho-L-histidyl/L-threonyl-[pyruvate, phosphate dikinase] + ADP = N(tele)-phospho-L-histidyl/O-phospho-L-threonyl-[pyruvate, phosphate dikinase] + AMP + H(+). The enzyme catalyses N(tele)-phospho-L-histidyl/O-phospho-L-threonyl-[pyruvate, phosphate dikinase] + phosphate + H(+) = N(tele)-phospho-L-histidyl/L-threonyl-[pyruvate, phosphate dikinase] + diphosphate. Its function is as follows. Bifunctional serine/threonine kinase and phosphorylase involved in the regulation of the pyruvate, phosphate dikinase (PPDK) by catalyzing its phosphorylation/dephosphorylation. The polypeptide is Putative pyruvate, phosphate dikinase regulatory protein (Bradyrhizobium sp. (strain ORS 278)).